The primary structure comprises 183 residues: Ribosome-recycling factor (183 aa).

The protein belongs to the RRF family.

The protein localises to the cytoplasm. Its function is as follows. Responsible for the release of ribosomes from messenger RNA at the termination of protein biosynthesis. May increase the efficiency of translation by recycling ribosomes from one round of translation to another. The chain is Ribosome-recycling factor from Mycoplasmoides gallisepticum (strain R(low / passage 15 / clone 2)) (Mycoplasma gallisepticum).